Here is a 102-residue protein sequence, read N- to C-terminus: Putative septation protein SpoVG 2 (102 aa).

It belongs to the SpoVG family.

Could be involved in septation. The sequence is that of Putative septation protein SpoVG 2 from Listeria innocua serovar 6a (strain ATCC BAA-680 / CLIP 11262).